A 954-amino-acid polypeptide reads, in one-letter code: Valine--tRNA ligase (954 aa).

The 'HIGH' region motif lies at proline 48 to histidine 58. Positions lysine 560 to serine 564 match the 'KMSKS' region motif. Residue lysine 563 participates in ATP binding. The stretch at alanine 883–leucine 954 forms a coiled coil.

It belongs to the class-I aminoacyl-tRNA synthetase family. ValS type 1 subfamily. As to quaternary structure, monomer.

It localises to the cytoplasm. The catalysed reaction is tRNA(Val) + L-valine + ATP = L-valyl-tRNA(Val) + AMP + diphosphate. Functionally, catalyzes the attachment of valine to tRNA(Val). As ValRS can inadvertently accommodate and process structurally similar amino acids such as threonine, to avoid such errors, it has a 'posttransfer' editing activity that hydrolyzes mischarged Thr-tRNA(Val) in a tRNA-dependent manner. This Actinobacillus pleuropneumoniae serotype 3 (strain JL03) protein is Valine--tRNA ligase.